Reading from the N-terminus, the 145-residue chain is D-aminoacyl-tRNA deacylase (145 aa).

The Gly-cisPro motif, important for rejection of L-amino acids signature appears at 137-138; sequence GP.

It belongs to the DTD family. Homodimer.

The protein localises to the cytoplasm. The enzyme catalyses glycyl-tRNA(Ala) + H2O = tRNA(Ala) + glycine + H(+). It carries out the reaction a D-aminoacyl-tRNA + H2O = a tRNA + a D-alpha-amino acid + H(+). Its function is as follows. An aminoacyl-tRNA editing enzyme that deacylates mischarged D-aminoacyl-tRNAs. Also deacylates mischarged glycyl-tRNA(Ala), protecting cells against glycine mischarging by AlaRS. Acts via tRNA-based rather than protein-based catalysis; rejects L-amino acids rather than detecting D-amino acids in the active site. By recycling D-aminoacyl-tRNA to D-amino acids and free tRNA molecules, this enzyme counteracts the toxicity associated with the formation of D-aminoacyl-tRNA entities in vivo and helps enforce protein L-homochirality. In Lactobacillus delbrueckii subsp. bulgaricus (strain ATCC BAA-365 / Lb-18), this protein is D-aminoacyl-tRNA deacylase.